Consider the following 1171-residue polypeptide: Putative tricorn protease homolog 2 (1171 aa).

Residues 432-498 (AGYPPDAGDE…GSPGTPATAG (67 aa)) are disordered. Composition is skewed to low complexity over residues 444 to 456 (AGTAARADSAPDA) and 466 to 498 (IAAGTGTGDIADADAAAGGTVTPGSPGTPATAG). The active-site Charge relay system is the H827. Residues 842–941 (YQRWQGLLGA…RVAVVPLVDE (100 aa)) form a PDZ-like region. 1002 to 1004 (AGG) contacts substrate. S1051 serves as the catalytic Nucleophile. Position 1079-1081 (1079-1081 (GMT)) interacts with substrate. Residue E1109 is the Charge relay system of the active site. A disordered region spans residues 1149-1171 (PPATPPGYEAVPDRSRPPLPPRE). Residues 1159 to 1171 (VPDRSRPPLPPRE) show a composition bias toward basic and acidic residues.

Belongs to the peptidase S41B family.

The protein localises to the cytoplasm. Degrades oligopeptides in a sequential manner. The polypeptide is Putative tricorn protease homolog 2 (tri2) (Streptomyces coelicolor (strain ATCC BAA-471 / A3(2) / M145)).